The sequence spans 583 residues: Arginine--tRNA ligase (583 aa).

The short motif at 123–133 (PNIAKEMHVGH) is the 'HIGH' region element.

Belongs to the class-I aminoacyl-tRNA synthetase family. Monomer.

The protein localises to the cytoplasm. The enzyme catalyses tRNA(Arg) + L-arginine + ATP = L-arginyl-tRNA(Arg) + AMP + diphosphate. The sequence is that of Arginine--tRNA ligase from Blochmanniella floridana.